A 666-amino-acid polypeptide reads, in one-letter code: MVDDEDDITFDSPEEEIAHYREKYRQALDMLTDTRAELEEFQQSSKELEDEMEQELAANDKQQADLREKIKRLDAEKEEWRTKHIALQKMHSSTTSAMQREMDNLRSERDKTLVALRDLEMGNDELERNERVAISSLLDLESKYNRAIEEKTLLEQDLAQKDELETETQRLKDELREANEEISILKDQLARAIATPPSSVSTSSPIHDAACDLSRIHLSDDINASPLPPPVPSKNKSITPEGHSPRRGLSRSGTMSSIPVASPSTKRFSQQIPHSPSFSTLSRSTTSRNLAAAAGTPGSPALARSRSGIPQASPARGIVLASHQQTKSRGFKLLHDLQARLKATDDKLGGAKVPRRNVSNPASVFGVGKRVTSTTSTTSSTTTAPAPHARVTALAKDHNTTPTAQSQQFPGSGIMSPGWVLVGEGEGEDTPTGPWSMTLPAEPNSPLDPTFRSSSTTSNRSLPSRPGIPSPLASGSARSTTSGTAQRQAGQRPSSRLGLKASRRDSEARPLSPSMIPVPSFSSRPMSPDVYQPLRSATPTSGFSSFSASASTSNPPRPNSRTGKRNPIGRGPPPLSSSTRLHHQRSRQSLSGAGPTPTTGADKVERAKRGPRRSSLSNMDKPSLMSASPGSRTPSGRPTSVHVFRETPPPVPRIPSAILKESKVKK.

Residues 14–195 (EEEIAHYREK…KDQLARAIAT (182 aa)) are a coiled coil. 4 disordered regions span residues 40–64 (EFQQSSKELEDEMEQELAANDKQQA), 220–310 (DDIN…SGIP), 369–388 (KRVTSTTSTTSSTTTAPAPH), and 397–666 (DHNT…KVKK). Positions 251–274 (RSGTMSSIPVASPSTKRFSQQIPH) are enriched in polar residues. 2 stretches are compositionally biased toward low complexity: residues 275–287 (SPSFSTLSRSTTS) and 372–383 (TSTTSTTSSTTT). The span at 400 to 410 (TTPTAQSQQFP) shows a compositional bias: polar residues. Composition is skewed to low complexity over residues 449-465 (PTFRSSSTTSNRSLPSR), 473-485 (ASGSARSTTSGTA), and 536-554 (SATPTSGFSSFSASASTSN). Composition is skewed to polar residues over residues 587–599 (RQSLSGAGPTPTT) and 614–638 (SSLSNMDKPSLMSASPGSRTPSGRP).

Belongs to the nudE family. As to quaternary structure, self-associates. Interacts with PAC1.

The protein localises to the cytoplasm. Its subcellular location is the cytoskeleton. Its function is as follows. Required for nuclear migration. The chain is Nuclear distribution protein nudE homolog 1 (NDE1) from Cryptococcus neoformans var. neoformans serotype D (strain B-3501A) (Filobasidiella neoformans).